Reading from the N-terminus, the 123-residue chain is Small ribosomal subunit protein uS13 (123 aa).

The interval 94–123 (GLPVRGQSTKSNARTRKGPRKTVAGKKSTK) is disordered. The span at 106-123 (ARTRKGPRKTVAGKKSTK) shows a compositional bias: basic residues.

This sequence belongs to the universal ribosomal protein uS13 family. As to quaternary structure, part of the 30S ribosomal subunit. Forms a loose heterodimer with protein S19. Forms two bridges to the 50S subunit in the 70S ribosome.

Located at the top of the head of the 30S subunit, it contacts several helices of the 16S rRNA. In the 70S ribosome it contacts the 23S rRNA (bridge B1a) and protein L5 of the 50S subunit (bridge B1b), connecting the 2 subunits; these bridges are implicated in subunit movement. Contacts the tRNAs in the A and P-sites. This is Small ribosomal subunit protein uS13 from Mycoplasmopsis agalactiae (strain NCTC 10123 / CIP 59.7 / PG2) (Mycoplasma agalactiae).